We begin with the raw amino-acid sequence, 158 residues long: Small ribosomal subunit protein bS16 (158 aa).

A compositionally biased stretch (low complexity) spans 111–121 (AAAGLAEAPTK). The interval 111–158 (AAAGLAEAPTKPAKKAPKAEAAPKTEAAPKADAPKTEEQAGAGSGEQG) is disordered. A compositionally biased stretch (basic and acidic residues) spans 127 to 148 (PKAEAAPKTEAAPKADAPKTEE).

It belongs to the bacterial ribosomal protein bS16 family.

The sequence is that of Small ribosomal subunit protein bS16 from Salinispora arenicola (strain CNS-205).